The following is a 518-amino-acid chain: Hyccin (518 aa).

Disordered regions lie at residues 385–410 and 466–492; these read GLRR…MDQL and VFSG…EGVA. Over residues 393 to 403 the composition is skewed to basic and acidic residues; the sequence is SSKEKDKEKDA. Polar residues predominate over residues 466-484; sequence VFSGNQPSSRASSPTSNHV.

Belongs to the Hyccin family. In terms of assembly, component of a phosphatidylinositol 4-kinase (PI4K) complex.

The protein localises to the cytoplasm. It localises to the cytosol. The protein resides in the cell membrane. In terms of biological role, component of a complex required to localize phosphatidylinositol 4-kinase (PI4K) to the plasma membrane. The complex acts as a regulator of phosphatidylinositol 4-phosphate (PtdIns(4)P) synthesis. This chain is Hyccin (hycc1), found in Danio rerio (Zebrafish).